Consider the following 188-residue polypeptide: Elongation factor P (188 aa).

It belongs to the elongation factor P family.

The protein resides in the cytoplasm. Its pathway is protein biosynthesis; polypeptide chain elongation. Involved in peptide bond synthesis. Stimulates efficient translation and peptide-bond synthesis on native or reconstituted 70S ribosomes in vitro. Probably functions indirectly by altering the affinity of the ribosome for aminoacyl-tRNA, thus increasing their reactivity as acceptors for peptidyl transferase. This is Elongation factor P from Rhodopseudomonas palustris (strain BisB5).